The primary structure comprises 608 residues: Centromere DNA-binding protein complex CBF3 subunit B (608 aa).

Residues 14-42 (CSVCTRRKVKCDRMIPCGNCRKRGQDSEC) constitute a DNA-binding region (zn(2)-C6 fungal-type). The residue at position 575 (S575) is a Phosphoserine.

In terms of assembly, component of the CBF3 copmplex, which is formed of CBF3A/CBF2, CBF3B/CEP3, CBF3C/CTF13 and CBF3D.

The protein localises to the nucleus. It is found in the chromosome. It localises to the centromere. Acts as a component of the centromere DNA-binding protein complex CBF3, which is essential for chromosome segregation and movement of centromeres along microtubules. CBF3 is required for the recruitment of other kinetochore complexes to CEN DNA. It plays a role in the attachment of chromosomes to the spindle and binds selectively to a highly conserved DNA sequence called CDEIII, found in centromers and in several promoters. This is Centromere DNA-binding protein complex CBF3 subunit B (CEP3) from Saccharomyces cerevisiae (strain ATCC 204508 / S288c) (Baker's yeast).